The chain runs to 398 residues: uncharacterized protein (398 aa).

The BIG2 domain occupies 240-306 (SLNKNIDQLI…SITVTTNDGS (67 aa)).

This is an uncharacterized protein from Clostridium acetobutylicum (strain ATCC 824 / DSM 792 / JCM 1419 / IAM 19013 / LMG 5710 / NBRC 13948 / NRRL B-527 / VKM B-1787 / 2291 / W).